The following is a 1304-amino-acid chain: MGAASGRRGPGLLLPLLLLLPPQPALALDPGLQPGNFSADEAGAQLFAQSYNSSAEQVLFQSVAASWAHDTNITAENARRQEEAALLSQEFAEAWGQKAKELYEPVWQNFTDPQLRRIIGAVRTLGSANLPLAKRQQYNALLSNMSRIYSTAKVCLPNKTATCWSLDPDLTNILASSRSYAMLLFAWEGWHNAAGIPLKPLYEDFTALSNEAYKQDGFTDTGAYWRSWYNSPTFEDDLEHLYQQLEPLYLNLHAFVRRALHRRYGDRYINLRGPIPAHLLGDMWAQSWENIYDMVVPFPDKPNLDVTSTMLQQGWNATHMFRVAEEFFTSLELSPMPPEFWEGSMLEKPADGREVVCHASAWDFYNRKDFRIKQCTRVTMDQLSTVHHEMGHIQYYLQYKDLPVSLRGGANPGFHEAIGDVLALSVSTPAHLHKIGLLDNVTNDTESDINYLLKMALEKIAFLPFGYLVDQWRWGVFSGRTPNSRYNFDWWYLRTKYQGICPPVTRNETHFDAGAKFHVPNVTPYIRYFVSFVLQFQFHEALCKEAGYEGPLHQCDIYQSTKAGAKLRKVLQAGSSRPWQEVLKDMVGLDALDAQPLLKYFQPVTQWLQEQNQQNGEVLGWPEYQWHPPLPDNYPEGIDLVTDEAEASKFVEEYDRTSQVVWNEYAEANWNYNTNITTETSKILLQKNMQIANHTLKYGTQARRFDVNQLQNTTIKRIIKKVQDLERAALPAQELEEYNKILLDMETTYSVATVCHTNGSCLQLEPDLTNVMATSRKYEDLLWAWEGWRDKAGRAILQFYPKYVELINQAARLNGYVDAGDSWRSMYETPSLEQDLERLFQELQPLYLNLHAYVRRALHRHYGAQHINLEGPIPAHLLGNMWAQTWSNIYDLVVPFPSAPSMDTTEAMLKQGWTPRRMFKEADDFFTSLGLLPVPPEFWNKSMLEKPTDGREVVCHASAWDFYNGKDFRIKQCTTVNLEDLVVAHHEMGHIQYFMQYKDLPVALREGANPGFHEAIGDVLALSVSTPKHLHSLNLLSSEGGSDEHDINFLMKMALDKIAFIPFSYLVDQWRWRVFDGSITKENYNQEWWSLRLKYQGLCPPVPRTQGDFDPGAKFHIPSSVPYIRYFVSFIIQFQFHEALCQAAGHTGPLHKCDIYQSKEAGQRLATAMKLGFSRPWPEAMQLITGQPNMSASAMLSYFKPLLDWLRTENELHGEKLGWPQYNWTPNSARSEGPLPDSGRVSFLGLDLDAQQARVGQWLLLFLGIALLVATLGLSQRLFSIRHRSLHRHSHGPQFDSEVELRHS.

The signal sequence occupies residues 1–27; sequence MGAASGRRGPGLLLPLLLLLPPQPALA. The Extracellular segment spans residues 28 to 1257; the sequence is LDPGLQPGNF…LDAQQARVGQ (1230 aa). N-linked (GlcNAc...) asparagine glycosylation is found at Asn-36, Asn-52, Asn-72, Asn-109, Asn-144, and Asn-158. 2 consecutive Peptidase M2 domains span residues 38-622 and 641-1220; these read SADE…LGWP and VTDE…LGWP. Cys-155 and Cys-163 form a disulfide bridge. Tyr-229 lines the chloride pocket. N-linked (GlcNAc...) asparagine glycosylation occurs at Asn-316. Cys-357 and Cys-375 form a disulfide bridge. Residue His-388 participates in Zn(2+) binding. Residue Glu-389 is the Proton acceptor 1 of the active site. Zn(2+) contacts are provided by His-392 and Glu-416. N-linked (GlcNAc...) asparagine glycosylation is found at Asn-440, Asn-443, and Asn-507. The active-site Proton donor 1 is His-518. A chloride-binding site is contributed by Arg-527. Cysteines 543 and 555 form a disulfide. Asn-675 carries N-linked (GlcNAc...) asparagine glycosylation. 2 N-linked (GlcNAc...) (complex) asparagine glycosylation sites follow: Asn-693 and Asn-712. Cysteines 755 and 761 form a disulfide. A glycan (N-linked (GlcNAc...) asparagine) is linked at Asn-758. Chloride contacts are provided by Arg-789 and Tyr-827. N-linked (GlcNAc...) asparagine glycosylation is present at Asn-940. Cys-955 and Cys-973 form a disulfide bridge. Residue His-986 coordinates Zn(2+). The Proton acceptor 2 role is filled by Glu-987. Zn(2+) is bound by residues His-990 and Glu-1014. Positions 1088 and 1092 each coordinate chloride. The active-site Proton donor 2 is His-1116. Residue Arg-1125 coordinates chloride. Cysteines 1141 and 1153 form a disulfide. Asn-1189 is a glycosylation site (N-linked (GlcNAc...) asparagine). The tract at residues 1213–1254 is juxtamembrane stalk; that stretch reads HGEKLGWPQYNWTPNSARSEGPLPDSGRVSFLGLDLDAQQAR. The helical transmembrane segment at 1258 to 1274 threads the bilayer; that stretch reads WLLLFLGIALLVATLGL. Residues 1275–1304 lie on the Cytoplasmic side of the membrane; the sequence is SQRLFSIRHRSLHRHSHGPQFDSEVELRHS. Ser-1297 carries the phosphoserine modification.

Belongs to the peptidase M2 family. As to quaternary structure, monomer and homodimer; homodimerizes following binding to an inhibitor. Interacts with calmodulin (CALM1, CALM2 or CALM3); interaction takes place in the cytoplasmic region and regulates phosphorylation and proteolytic cleavage. Requires Zn(2+) as cofactor. Chloride serves as cofactor. Post-translationally, produced following proteolytic cleavage by secretase enzymes that cleave the transmembrane form in the juxtamembrane stalk region upstream of the transmembrane region. Cleavage can take place at different sites of the juxtamembrane stalk region. Phosphorylated by CK2 on Ser-1297; which allows membrane retention. Phosphorylated on tyrosine residues on its extracellular part, promoting cleavage by secretase enzymes and formation of the soluble form (Angiotensin-converting enzyme, soluble form).

The protein resides in the cell membrane. Its subcellular location is the cytoplasm. It is found in the secreted. The catalysed reaction is Release of a C-terminal dipeptide, oligopeptide-|-Xaa-Yaa, when Xaa is not Pro, and Yaa is neither Asp nor Glu. Thus, conversion of angiotensin I to angiotensin II, with increase in vasoconstrictor activity, but no action on angiotensin II.. It catalyses the reaction angiotensin I + H2O = L-histidyl-L-leucine + angiotensin II. It carries out the reaction bradykinin + H2O = L-Phe-L-Arg + bradykinin(1-7). The enzyme catalyses substance P + H2O = substance P(1-9) + L-Leu-L-Met-NH2. The catalysed reaction is substance P + H2O = substance P(1-8) + Gly-L-Leu-L-Met-NH2. It catalyses the reaction substance P + H2O = L-Phe-L-Phe-Gly-L-Leu-L-Met-NH2 + substance P(1-6). It carries out the reaction neurotensin + H2O = neurotensin(1-11) + L-isoleucyl-L-leucine. The enzyme catalyses goralatide + H2O = N-acetyl-L-seryl-L-aspartate + L-lysyl-L-proline. The catalysed reaction is Met-enkephalin + H2O = L-phenylalanyl-L-methionine + L-tyrosylglycylglycine. It catalyses the reaction Leu-enkephalin + H2O = L-tyrosylglycylglycine + L-phenylalanyl-L-leucine. It carries out the reaction Met-enkephalin-Arg-Phe + H2O = L-arginyl-L-phenylalanine + Met-enkephalin. Its activity is regulated as follows. The dipeptidyl carboxypeptidase activity is strongly activated by chloride. The dipeptidyl carboxypeptidase activity is specifically inhibited by lisinopril, captopril and enalaprilat. Strongly inhibited by lisinopril and captopril. Its function is as follows. Dipeptidyl carboxypeptidase that removes dipeptides from the C-terminus of a variety of circulating hormones, such as angiotensin I, bradykinin or enkephalins, thereby playing a key role in the regulation of blood pressure, electrolyte homeostasis or synaptic plasticity. Composed of two similar catalytic domains, each possessing a functional active site, with different selectivity for substrates. Plays a major role in the angiotensin-renin system that regulates blood pressure and sodium retention by the kidney by converting angiotensin I to angiotensin II, resulting in an increase of the vasoconstrictor activity of angiotensin. Also able to inactivate bradykinin, a potent vasodilator, and therefore enhance the blood pressure response. Acts as a regulator of synaptic transmission by mediating cleavage of neuropeptide hormones, such as substance P, neurotensin or enkephalins. Catalyzes degradation of different enkephalin neuropeptides (Met-enkephalin, Leu-enkephalin, Met-enkephalin-Arg-Phe and possibly Met-enkephalin-Arg-Gly-Leu). Acts as a regulator of synaptic plasticity in the nucleus accumbens of the brain by mediating cleavage of Met-enkephalin-Arg-Phe, a strong ligand of Mu-type opioid receptor OPRM1, into Met-enkephalin. Met-enkephalin-Arg-Phe cleavage by ACE decreases activation of OPRM1, leading to long-term synaptic potentiation of glutamate release. Also acts as a regulator of hematopoietic stem cell differentiation by mediating degradation of hemoregulatory peptide N-acetyl-SDKP (AcSDKP). Acts as a regulator of cannabinoid signaling pathway by mediating degradation of hemopressin, an antagonist peptide of the cannabinoid receptor CNR1. Involved in amyloid-beta metabolism by catalyzing degradation of Amyloid-beta protein 40 and Amyloid-beta protein 42 peptides, thereby preventing plaque formation. Catalyzes cleavage of cholecystokinin (maturation of Cholecystokinin-8 and Cholecystokinin-5) and Gonadoliberin-1 (both maturation and degradation) hormones. Degradation of hemoregulatory peptide N-acetyl-SDKP (AcSDKP) and amyloid-beta proteins is mediated by the N-terminal catalytic domain, while angiotensin I and cholecystokinin cleavage is mediated by the C-terminal catalytic region. Soluble form that is released in blood plasma and other body fluids following proteolytic cleavage in the juxtamembrane stalk region. Functionally, isoform produced by alternative promoter usage that is specifically expressed in spermatocytes and adult testis, and which is required for male fertility. In contrast to somatic isoforms, only contains one catalytic domain. Acts as a dipeptidyl carboxypeptidase that removes dipeptides from the C-terminus of substrates. The identity of substrates that are needed for male fertility is unknown. May also have a glycosidase activity which releases GPI-anchored proteins from the membrane by cleaving the mannose linkage in the GPI moiety. The GPIase activity was reported to be essential for the egg-binding ability of the sperm. This activity is however unclear and has been challenged by other groups, suggesting that it may be indirect. This is Angiotensin-converting enzyme from Pan troglodytes (Chimpanzee).